The sequence spans 581 residues: Multicopper oxidase LPR1 (581 aa).

An N-terminal signal peptide occupies residues 1–28 (MESLLCRRRIKRVMVLIIALTWLRSTCG). 4 residues coordinate Cu cation: His-148, His-150, His-196, and His-198. N-linked (GlcNAc...) asparagine glycosylation is found at Asn-254, Asn-298, Asn-386, and Asn-458. The 70-residue stretch at 283–352 (PRLNVRRRKY…DVVVDFYKSP (70 aa)) folds into the Plastocyanin-like domain. Cu cation-binding residues include His-464, His-467, and His-469. The N-linked (GlcNAc...) asparagine glycan is linked to Asn-546. Cu cation-binding residues include His-562, Cys-563, His-564, His-568, and Met-573.

The protein belongs to the multicopper oxidase family. Cu cation is required as a cofactor.

Its subcellular location is the endoplasmic reticulum membrane. In terms of biological role, multicopper oxidase that may be involved in copper homeostasis and oxidative stress response, and that is necessary for root growth inhibition by low phosphate conditions. Functions together with LPR2 and PDR2 in a common pathway that adjusts root meristem activity to phosphate availability. Oxidizes the substrate 2,2'-azinobis-(3-ethylbenzthiazoline-6-sulphonate) in vitro. The sequence is that of Multicopper oxidase LPR1 (LPR1) from Arabidopsis thaliana (Mouse-ear cress).